Here is a 595-residue protein sequence, read N- to C-terminus: Neuroepithelial cell-transforming gene 1 protein (595 aa).

Met1 carries the N-acetylmethionine modification. The interval Met1–Glu42 is disordered. The necessary for nuclear localization stretch occupies residues Met1–Asp74. A Nuclear localization signal motif is present at residues Arg12–Arg19. Ser21 carries the phosphoserine modification. The short motif at Lys66–Lys72 is the Nuclear localization signal element. 3 positions are modified to phosphoserine: Ser100, Ser106, and Ser122. The segment at Gly127 to Arg151 is disordered. Over residues Ala133 to Thr146 the composition is skewed to polar residues. The DH domain maps to Lys174–Lys356. A PH domain is found at Val386 to Ala501. Ser508 carries the phosphoserine modification. The interval Cys555 to Val595 is disordered.

Interacts with RHOA in its GTP- and GDP-bound states, and with CDC42 in its GTP-bound state. Interacts with the PDZ 1 domain of BAIAP1.

Its subcellular location is the cytoplasm. The protein resides in the nucleus. Acts as a guanine nucleotide exchange factor (GEF) for RhoA GTPase. May be involved in activation of the SAPK/JNK pathway. Stimulates genotoxic stress-induced RHOB activity in breast cancer cells leading to their cell death. This is Neuroepithelial cell-transforming gene 1 protein (Net1) from Mus musculus (Mouse).